The following is a 283-amino-acid chain: Putative Ig-like domain-containing protein ORF10 (283 aa).

The first 55 residues, 1–55 (MIDKRNKKAVTHISTCLCHSSIPIYGDSPFLNTHRAAMDPRPLVLLLLLASHIST), serve as a signal peptide directing secretion. 8 N-linked (GlcNAc...) asparagine; by host glycosylation sites follow: Asn-75, Asn-92, Asn-121, Asn-157, Asn-179, Asn-198, Asn-223, and Asn-229. Residues 129-227 (QPLGQSIHHA…IDQQTNLTLT (99 aa)) enclose the Ig-like domain.

This is Putative Ig-like domain-containing protein ORF10 from Galliformes (FAdV-1).